Reading from the N-terminus, the 42-residue chain is Envelope protein P10 (42 aa).

The helical transmembrane segment at 20–40 (TTAAKIAVVYALVGLVGGLLL) threads the bilayer.

The protein resides in the virion membrane. Its function is as follows. Involved in cell lysis. This is Envelope protein P10 (P10) from Pseudomonas savastanoi pv. phaseolicola (Pseudomonas syringae pv. phaseolicola).